Consider the following 373-residue polypeptide: Erythronate-4-phosphate dehydrogenase (373 aa).

Substrate contacts are provided by S45 and T66. 2 residues coordinate NAD(+): D146 and T175. Residue R208 is part of the active site. Residue D232 participates in NAD(+) binding. The active site involves E237. Residue H254 is the Proton donor of the active site. G257 provides a ligand contact to NAD(+). Y258 lines the substrate pocket.

The protein belongs to the D-isomer specific 2-hydroxyacid dehydrogenase family. PdxB subfamily. In terms of assembly, homodimer.

It localises to the cytoplasm. It carries out the reaction 4-phospho-D-erythronate + NAD(+) = (R)-3-hydroxy-2-oxo-4-phosphooxybutanoate + NADH + H(+). It functions in the pathway cofactor biosynthesis; pyridoxine 5'-phosphate biosynthesis; pyridoxine 5'-phosphate from D-erythrose 4-phosphate: step 2/5. In terms of biological role, catalyzes the oxidation of erythronate-4-phosphate to 3-hydroxy-2-oxo-4-phosphonooxybutanoate. This Serratia proteamaculans (strain 568) protein is Erythronate-4-phosphate dehydrogenase.